The following is a 779-amino-acid chain: Endonuclease MutS2 (779 aa).

328 to 335 lines the ATP pocket; sequence GPNTGGKT. In terms of domain architecture, Smr spans 704–779; sequence LDLRGKRYEE…GSGATIVTLG (76 aa).

The protein belongs to the DNA mismatch repair MutS family. MutS2 subfamily. Homodimer. Binds to stalled ribosomes, contacting rRNA.

In terms of biological role, endonuclease that is involved in the suppression of homologous recombination and thus may have a key role in the control of bacterial genetic diversity. Acts as a ribosome collision sensor, splitting the ribosome into its 2 subunits. Detects stalled/collided 70S ribosomes which it binds and splits by an ATP-hydrolysis driven conformational change. Acts upstream of the ribosome quality control system (RQC), a ribosome-associated complex that mediates the extraction of incompletely synthesized nascent chains from stalled ribosomes and their subsequent degradation. Probably generates substrates for RQC. The protein is Endonuclease MutS2 of Streptococcus pyogenes serotype M1.